The sequence spans 276 residues: MQIHKLCFLVLFLANAAFAVKFNFDSFDGSNLLFLGDAELGPSSDGVSRSGALSMTRDENPFSHGQGLYINQIPFKPSNTSSPFSFETSFTFSITPRTKPNSGQGFAFIITPEADNSGASDGGYLGILNKTNDGKPENHILAIEFDTFQNKEFLDISGNHVGVNINSMTSLVAEKAGYWVQTRVGKRKVWSFKDVNLSSGERFKAWVEFRNKDSTITVTLAPENVKKPKRALIEAPRVLNEVLLQNMYAGFAGSMGRAVERHDIWSWSFENAAKNN.

The signal sequence occupies residues 1 to 19 (MQIHKLCFLVLFLANAAFA). Positions 20–270 (VKFNFDSFDG…RHDIWSWSFE (251 aa)) are legume-lectin like. Residues Asn79, Asn129, and Asn196 are each glycosylated (N-linked (GlcNAc...) asparagine).

It belongs to the leguminous lectin family.

The protein localises to the secreted. It is found in the extracellular space. The protein resides in the apoplast. This chain is Lectin-like protein At3g16530, found in Arabidopsis thaliana (Mouse-ear cress).